We begin with the raw amino-acid sequence, 158 residues long: Cyclic pyranopterin monophosphate synthase (158 aa).

Residues Leu-75 to His-77 and Met-113 to Glu-114 contribute to the substrate site. Residue Asp-128 is part of the active site.

Belongs to the MoaC family. Homohexamer; trimer of dimers.

The enzyme catalyses (8S)-3',8-cyclo-7,8-dihydroguanosine 5'-triphosphate = cyclic pyranopterin phosphate + diphosphate. It functions in the pathway cofactor biosynthesis; molybdopterin biosynthesis. Its function is as follows. Catalyzes the conversion of (8S)-3',8-cyclo-7,8-dihydroguanosine 5'-triphosphate to cyclic pyranopterin monophosphate (cPMP). In Acidiphilium cryptum (strain JF-5), this protein is Cyclic pyranopterin monophosphate synthase.